The following is a 90-amino-acid chain: Small ribosomal subunit protein bS20 (90 aa).

Belongs to the bacterial ribosomal protein bS20 family.

Binds directly to 16S ribosomal RNA. This chain is Small ribosomal subunit protein bS20, found in Nautilia profundicola (strain ATCC BAA-1463 / DSM 18972 / AmH).